Consider the following 340-residue polypeptide: Guanine nucleotide-binding protein subunit beta-1 (340 aa).

WD repeat units follow at residues 53–83, 95–125, 141–170, 182–212, 224–254, 268–298, and 310–340; these read GHLA…IVWD, LRSS…SIYS, GHTG…ALWD, GHTG…KLWD, GHES…RLFD, NIIC…NVWD, and GHDN…KIWN.

The protein belongs to the WD repeat G protein beta family. As to quaternary structure, g proteins are composed of 3 units, alpha, beta and gamma. Interacts with G protein gamma subunits gpc-1 and gpc-2 and with egl-10 and eat-16. Interacts with goa-1 (in GDP-bound form).

In terms of biological role, guanine nucleotide-binding proteins (G proteins) are involved as a modulator or transducer in various transmembrane signaling systems. The beta and gamma chains are required for the GTPase activity, for replacement of GDP by GTP, and for G protein-effector interaction. In the early embryo, controls the magnitude of the forces acting on centrosomes but is not required for generating asymmetric forces. The polypeptide is Guanine nucleotide-binding protein subunit beta-1 (gpb-1) (Caenorhabditis briggsae).